The sequence spans 238 residues: COMM domain-containing protein 10 homolog Vlet (238 aa).

Over residues 43–77 the composition is skewed to low complexity; sequence ASASATSSTVGTSVTTTGRVDSSTEENPTSNTEPE. Residues 43-78 form a disordered region; it reads ASASATSSTVGTSVTTTGRVDSSTEENPTSNTEPEY. The COMM domain occupies 161 to 225; it reads VIEDVAWKLN…SIQGELDAML (65 aa).

This sequence belongs to the COMM domain-containing protein 10 family. In terms of assembly, component of the commander complex consisting of the CCC subcomplex and the retriever subcomplex. Component of the CCC subcomplex. Interacts with Smn; along with Sbat and Hez may form an accessory subcomplex involved in SMN complex function.

In terms of biological role, scaffold protein in the commander complex that is essential for endosomal recycling of transmembrane cargos; the commander complex is composed of the CCC subcomplex and the retriever subcomplex. May modulate activity of cullin-RING E3 ubiquitin ligase (CRL) complexes. May down-regulate activation of NF-kappa-B. May have an accessory function in the survival motor neuron (SMN) complex. Required for neuromuscular function and organismal viability. The chain is COMM domain-containing protein 10 homolog Vlet from Drosophila melanogaster (Fruit fly).